Consider the following 361-residue polypeptide: [LysW]-lysine hydrolase (361 aa).

Histidine 67 is a Zn(2+) binding site. Aspartate 69 is an active-site residue. Aspartate 91 is a binding site for Zn(2+). Glutamate 124 functions as the Proton acceptor in the catalytic mechanism. 3 residues coordinate Zn(2+): glutamate 125, glutamate 148, and histidine 326.

This sequence belongs to the peptidase M20A family. LysK subfamily. Zn(2+) is required as a cofactor. Co(2+) serves as cofactor.

It is found in the cytoplasm. It catalyses the reaction [amino-group carrier protein]-C-terminal-gamma-(L-lysyl)-L-glutamate + H2O = [amino-group carrier protein]-C-terminal-L-glutamate + L-lysine. Its pathway is amino-acid biosynthesis; L-lysine biosynthesis via AAA pathway; L-lysine from L-alpha-aminoadipate (Thermus route): step 5/5. In terms of biological role, catalyzes the release of L-lysine from [LysW]-gamma-L-lysine. The protein is [LysW]-lysine hydrolase of Thermus thermophilus (strain ATCC 27634 / DSM 579 / HB8).